Consider the following 165-residue polypeptide: Probable bacterial non-heme ferritin-like protein (165 aa).

One can recognise a Ferritin-like diiron domain in the interval 1–145; sequence MLSENVVKLL…SILDKLNFLG (145 aa). Residues glutamate 17, glutamate 50, histidine 53, glutamate 94, and glutamine 127 each contribute to the Fe cation site.

Belongs to the ferritin family. Prokaryotic subfamily.

It is found in the cytoplasm. The sequence is that of Probable bacterial non-heme ferritin-like protein (ftnB) from Haemophilus influenzae (strain ATCC 51907 / DSM 11121 / KW20 / Rd).